The following is a 918-amino-acid chain: Isoleucine--tRNA ligase (918 aa).

Residues 57-67 (PYANGDIHIGH) carry the 'HIGH' region motif. Glu568 is a binding site for L-isoleucyl-5'-AMP. Positions 609-613 (KMSKS) match the 'KMSKS' region motif. Position 612 (Lys612) interacts with ATP. Positions 894, 897, 909, and 912 each coordinate Zn(2+).

It belongs to the class-I aminoacyl-tRNA synthetase family. IleS type 1 subfamily. As to quaternary structure, monomer. The cofactor is Zn(2+).

It localises to the cytoplasm. It carries out the reaction tRNA(Ile) + L-isoleucine + ATP = L-isoleucyl-tRNA(Ile) + AMP + diphosphate. Its function is as follows. Catalyzes the attachment of isoleucine to tRNA(Ile). As IleRS can inadvertently accommodate and process structurally similar amino acids such as valine, to avoid such errors it has two additional distinct tRNA(Ile)-dependent editing activities. One activity is designated as 'pretransfer' editing and involves the hydrolysis of activated Val-AMP. The other activity is designated 'posttransfer' editing and involves deacylation of mischarged Val-tRNA(Ile). The sequence is that of Isoleucine--tRNA ligase from Sulfurovum sp. (strain NBC37-1).